The sequence spans 50 residues: Small ribosomal subunit protein uS14 (50 aa).

Residues Cys15, Cys18, Cys33, and Cys36 each coordinate Zn(2+).

Belongs to the universal ribosomal protein uS14 family. Zinc-binding uS14 subfamily. As to quaternary structure, part of the 30S ribosomal subunit. Requires Zn(2+) as cofactor.

Binds 16S rRNA, required for the assembly of 30S particles. This is Small ribosomal subunit protein uS14 from Methanosarcina acetivorans (strain ATCC 35395 / DSM 2834 / JCM 12185 / C2A).